The chain runs to 561 residues: Probable oligo-1,6-glucosidase 2 (561 aa).

The Nucleophile role is filled by Asp199. The active-site Proton donor is the Glu255.

Belongs to the glycosyl hydrolase 13 family.

It localises to the cytoplasm. The enzyme catalyses Hydrolysis of (1-&gt;6)-alpha-D-glucosidic linkages in some oligosaccharides produced from starch and glycogen by alpha-amylase, and in isomaltose.. This is Probable oligo-1,6-glucosidase 2 (ycdG) from Bacillus subtilis (strain 168).